Reading from the N-terminus, the 355-residue chain is Mitochondrial import inner membrane translocase subunit TIM50 (355 aa).

The N-terminal 44 residues, 1 to 44 (MAASAAVFLRLRSGLRQGARGLCARLATPPPRAPDQAAEIGSRA), are a transit peptide targeting the mitochondrion. The tract at residues 25–61 (RLATPPPRAPDQAAEIGSRAGTKAQTQGPQQQRSSEG) is disordered. Over 45-67 (GTKAQTQGPQQQRSSEGPSYAKK) the chain is Mitochondrial matrix. Residues 47–61 (KAQTQGPQQQRSSEG) show a composition bias toward polar residues. The helical transmembrane segment at 68–88 (VALWLARLLGAGGTVSVIYIF) threads the bilayer. Over 89–355 (GNNAVDENGA…SRLWPRSKQP (267 aa)) the chain is Mitochondrial intermembrane. Residues 145-288 (YYQPPYTLVL…LDLSAFLKTI (144 aa)) form the FCP1 homology domain. Ser-343 is modified (phosphoserine).

Belongs to the TIM50 family. As to quaternary structure, component of the TIM23 complex at least composed of TIMM23, TIMM17 (TIMM17A or TIMM17B) and TIMM50; within this complex, directly interacts with TIMM23. The complex interacts with the TIMM44 component of the PAM complex and with DNAJC15.

The protein resides in the mitochondrion inner membrane. In terms of biological role, essential component of the TIM23 complex, a complex that mediates the translocation of transit peptide-containing proteins across the mitochondrial inner membrane. Has some phosphatase activity in vitro; however such activity may not be relevant in vivo. In Bos taurus (Bovine), this protein is Mitochondrial import inner membrane translocase subunit TIM50 (TIMM50).